The primary structure comprises 76 residues: Large ribosomal subunit protein uL29 (76 aa).

The protein belongs to the universal ribosomal protein uL29 family.

The polypeptide is Large ribosomal subunit protein uL29 (Corynebacterium diphtheriae (strain ATCC 700971 / NCTC 13129 / Biotype gravis)).